A 1019-amino-acid chain; its full sequence is Probable LRR receptor-like serine/threonine-protein kinase At1g29720 (1019 aa).

A signal peptide spans 1-19 (MSIILWSFFLFFTIILSSL). Residues 20 to 615 (TNITTLASFS…EKTKHHIKYP (596 aa)) lie on the Extracellular side of the membrane. N21, N79, and N90 each carry an N-linked (GlcNAc...) asparagine glycan. 13 LRR repeats span residues 93–117 (ICRITELALKTMSLRGKLPPELTKL), 118–141 (PYLKSIELCRNYLSGTIPMEWAKM), 143–165 (YLTSISVCANNLSGNLPAGLQNF), 166–189 (KNLTFLGVEGNQFSGPIPDELGNL), 190–212 (TSLTGLELASNKFTGILPGTLAR), 214–236 (VNLERVRICDNNFTGIIPAYIGN), 237–261 (WTRLQKLHLYASGLTGPIPDAVVRL), 263–283 (NLLELSLSDTTGIKSFPNLSS), 284–307 (KGLKRLILRNVGLSGPIPSYIWNL), 308–330 (TDLKILDLSFNKLNGIVQGVQNP), 332–351 (KNIYLTGNLLSGNIESGGLL), 352–374 (NSQSYIDLSYNNFSWSSSCQKGS), and 375–398 (TINTYQSSYSKNNLTGLPPCAVPA). N-linked (GlcNAc...) asparagine glycans are attached at residues N153, N167, and N188. Residues N225 and N236 are each glycosylated (N-linked (GlcNAc...) asparagine). N-linked (GlcNAc...) asparagine glycosylation is found at N280 and N306. N-linked (GlcNAc...) asparagine glycans are attached at residues N363, N387, N469, and N558. Residues 616-636 (LILGASGALVTIVLLAVGIYA) traverse the membrane as a helical segment. Over 637-1019 (RGIYRRDNNR…STVENSSSSL (383 aa)) the chain is Cytoplasmic. In terms of domain architecture, Protein kinase spans 673-946 (FDQANKLGEG…EAVKMLEGEI (274 aa)). Residues 679-687 (LGEGGFGSV) and K701 contribute to the ATP site. Y746 carries the phosphotyrosine modification. The Proton acceptor role is filled by D797. Residue S830 is modified to Phosphoserine. A phosphothreonine mark is found at T831 and T836. Phosphotyrosine is present on Y844.

It belongs to the protein kinase superfamily. Ser/Thr protein kinase family.

Its subcellular location is the cell membrane. It catalyses the reaction L-seryl-[protein] + ATP = O-phospho-L-seryl-[protein] + ADP + H(+). The enzyme catalyses L-threonyl-[protein] + ATP = O-phospho-L-threonyl-[protein] + ADP + H(+). This Arabidopsis thaliana (Mouse-ear cress) protein is Probable LRR receptor-like serine/threonine-protein kinase At1g29720 (RFK1).